The following is a 187-amino-acid chain: ATP synthase subunit b 2 (187 aa).

The chain crosses the membrane as a helical span at residues 32-52; it reads TTFAAQILWLAIAFGLLYYLM.

The protein belongs to the ATPase B chain family. F-type ATPases have 2 components, F(1) - the catalytic core - and F(0) - the membrane proton channel. F(1) has five subunits: alpha(3), beta(3), gamma(1), delta(1), epsilon(1). F(0) has three main subunits: a(1), b(2) and c(10-14). The alpha and beta chains form an alternating ring which encloses part of the gamma chain. F(1) is attached to F(0) by a central stalk formed by the gamma and epsilon chains, while a peripheral stalk is formed by the delta and b chains.

The protein resides in the cell inner membrane. Its function is as follows. F(1)F(0) ATP synthase produces ATP from ADP in the presence of a proton or sodium gradient. F-type ATPases consist of two structural domains, F(1) containing the extramembraneous catalytic core and F(0) containing the membrane proton channel, linked together by a central stalk and a peripheral stalk. During catalysis, ATP synthesis in the catalytic domain of F(1) is coupled via a rotary mechanism of the central stalk subunits to proton translocation. Functionally, component of the F(0) channel, it forms part of the peripheral stalk, linking F(1) to F(0). The b'-subunit is a diverged and duplicated form of b found in plants and photosynthetic bacteria. The protein is ATP synthase subunit b 2 (atpF2) of Methylobacterium sp. (strain 4-46).